A 565-amino-acid polypeptide reads, in one-letter code: NAD-dependent malic enzyme (565 aa).

Residue Tyr104 is the Proton donor of the active site. Residue Arg157 coordinates NAD(+). Lys175 functions as the Proton acceptor in the catalytic mechanism. Positions 246, 247, and 270 each coordinate a divalent metal cation. Residues Asp270 and Asn418 each coordinate NAD(+).

It belongs to the malic enzymes family. As to quaternary structure, homotetramer. Mg(2+) serves as cofactor. Requires Mn(2+) as cofactor.

It catalyses the reaction (S)-malate + NAD(+) = pyruvate + CO2 + NADH. The enzyme catalyses oxaloacetate + H(+) = pyruvate + CO2. This is NAD-dependent malic enzyme from Escherichia coli (strain SMS-3-5 / SECEC).